The sequence spans 195 residues: Inhibitor of glycogen debranching 1 (195 aa).

The segment covering 1–18 (MTDPHLNTPQVSTSPTFE) has biased composition (polar residues). The segment at 1–101 (MTDPHLNTPQ…ERRSSGPMDF (101 aa)) is disordered. Ser-64 is modified (phosphoserine). Thr-65 bears the Phosphothreonine mark. Over residues 75-95 (EQARERESSIGEHAPGAERRS) the composition is skewed to basic and acidic residues. Ser-95 and Ser-96 each carry phosphoserine. Thr-132 bears the Phosphothreonine mark. The tract at residues 146-175 (NSYLDNNSNGNSARVPHGSPPQLGTRRKSS) is disordered. Polar residues predominate over residues 148-157 (YLDNNSNGNS). Ser-164 is subject to Phosphoserine.

In terms of assembly, interacts with GDB1.

It is found in the cytoplasm. Acts as an inhibitor of GDB1, enhancing the ability of cells to store glucose as glycogen. This is Inhibitor of glycogen debranching 1 (IGD1) from Saccharomyces cerevisiae (strain ATCC 204508 / S288c) (Baker's yeast).